A 2212-amino-acid chain; its full sequence is Voltage-dependent P/Q-type calcium channel subunit alpha-1A (2212 aa).

The Cytoplasmic portion of the chain corresponds to 1–100; it reads MARFGDEMPG…KYAKKITEWP (100 aa). An I repeat occupies 87–365; the sequence is NVVRKYAKKI…LVLGVLSGEF (279 aa). Residues 101–119 traverse the membrane as a helical segment; it reads PFEYMILATIIANCIVLAL. The Extracellular segment spans residues 120–138; it reads EQHLPDDDKTPMSERLDDT. A helical membrane pass occupies residues 139-156; that stretch reads EPYFIGIFCFEAGIKIVA. At 157–168 the chain is on the cytoplasmic side; that stretch reads LGFAFHKGSYLR. Residues 169 to 184 traverse the membrane as a helical segment; the sequence is NGWNVMDFVVVLTGIL. The Extracellular segment spans residues 185-192; that stretch reads ATVGTEFD. The chain crosses the membrane as a helical span at residues 193-211; sequence LRTLRAVRVLRPLKLVSGI. The Cytoplasmic portion of the chain corresponds to 212–230; the sequence is PSLQVVLKSIMKAMIPLLQ. Residues 231–250 traverse the membrane as a helical segment; sequence IGLLLFFAILIFAIIGLEFY. The Extracellular segment spans residues 251–337; sequence MGKFHTTCFE…NSNDASGNTW (87 aa). An N-linked (GlcNAc...) asparagine glycan is attached at N285. E320 is a Ca(2+) binding site. The chain crosses the membrane as a helical span at residues 338–362; the sequence is NWLYFIPLIIIGSFFMLNLVLGVLS. The Cytoplasmic segment spans residues 363-489; sequence GEFAKERERV…FYIRRMVKTQ (127 aa). The tract at residues 385–402 is binding to the beta subunit; it reads QQIERELNGYMEWISKAE. The residue at position 411 (T411) is a Phosphothreonine. 2 positions are modified to phosphoserine: S450 and S453. Residues 475–719 form an II repeat; sequence ERRMRFYIRR…VFLAIAVDNL (245 aa). Residues 490-509 form a helical membrane-spanning segment; that stretch reads AFYWTVLSLVALNTLWLAIV. Residues 510–523 are Extracellular-facing; it reads HYNQPEWLSDFLYY. A helical transmembrane segment spans residues 524-543; that stretch reads AEFIFLGLFMSEMFIKMYGL. The Cytoplasmic portion of the chain corresponds to 544–551; that stretch reads GTRPYFHS. The chain crosses the membrane as a helical span at residues 552–570; sequence SFNCFDCGVIIGSIFEVIW. Residues 571–580 lie on the Extracellular side of the membrane; it reads AVIKPGTSFG. Residues 581–599 traverse the membrane as a helical segment; the sequence is ISVLRALRLLRIFKVTKYW. The Cytoplasmic segment spans residues 600–618; it reads ASLRNLVVSLLNSMKSIIS. Residues 619–638 traverse the membrane as a helical segment; the sequence is LLFLLFLFIVVFALLGMQLF. Topologically, residues 639-691 are extracellular; the sequence is GGQFNFDEGTPPTNFDTFPAAIMTVFQILTGEDWNEVMYDEIKSQGGVQGGMV. Ca(2+) is bound at residue E670. The chain crosses the membrane as a helical span at residues 692-716; that stretch reads FSIYFIVLTLFGNYTLLNVFLAIAV. The Cytoplasmic segment spans residues 717 to 1190; the sequence is DNLANAQELT…TNPLRRLCHY (474 aa). Residues S752, S755, and S792 each carry the phosphoserine modification. Composition is skewed to basic and acidic residues over residues 814–824, 850–862, 871–924, and 932–958; these read PDVKTHLDRPL, RPRESARDPDARR, APGR…EGEP, and RPGDEPDDRPERRPRPRDATRPARAAD. Disordered regions lie at residues 814 to 1117 and 1137 to 1170; these read PDVK…RKPE and VNKNANPDPLPKKEEEKKEEEEADPGEDGPKPMP. S1038, S1042, and S1051 each carry phosphoserine. Residues 1056–1073 show a composition bias toward polar residues; the sequence is GNSTNPGPALATNPQNAA. The span at 1074–1083 shows a compositional bias: low complexity; sequence SRRTPNNPGN. A compositionally biased stretch (polar residues) spans 1094 to 1111; the sequence is ENSLIVTNPSSTQPNSAK. The segment covering 1153–1163 has biased composition (acidic residues); it reads KKEEEEADPGE. One copy of the III repeat lies at 1182 to 1465; sequence NPLRRLCHYI…IFVALIIITF (284 aa). Residues 1191–1214 form a helical membrane-spanning segment; the sequence is ILNLRYFEMCILMVIAMSSIALAA. Topologically, residues 1215–1231 are extracellular; that stretch reads EDPVQPNAPRNNVLRYF. Residues 1232–1251 form a helical membrane-spanning segment; it reads DYVFTGVFTFEMVIKMIDLG. Topologically, residues 1252-1258 are cytoplasmic; the sequence is LVLHQGA. The chain crosses the membrane as a helical span at residues 1259-1282; it reads YFRDLWNILDFIVVSGALVAFAFT. Residues 1283 to 1293 lie on the Extracellular side of the membrane; that stretch reads GNSKGKDINTI. Residues 1294-1311 traverse the membrane as a helical segment; sequence KSLRVLRVLRPLKTIKRL. The Cytoplasmic segment spans residues 1312–1330; that stretch reads PKLKAVFDCVVNSLKNVFN. The helical transmembrane segment at 1331–1350 threads the bilayer; the sequence is ILIVYMLFMFIFAVVAVQLF. Residues 1351–1437 are Extracellular-facing; sequence KGKFFHCTDE…QGPSPGYRME (87 aa). E1411 is a Ca(2+) binding site. A helical transmembrane segment spans residues 1438 to 1462; that stretch reads MSIFYVVYFVVFPFFFVNIFVALII. Over 1463 to 1518 the chain is Cytoplasmic; sequence ITFQEQGDKMMEEYSLEKNERACIDFAISAKPLTRHMPQNKQSFQYRMWQFVVSPP. The IV repeat unit spans residues 1502–1765; sequence NKQSFQYRMW…LFVAVIMDNF (264 aa). A helical transmembrane segment spans residues 1519–1537; it reads FEYTIMAMIALNTIVLMMK. Residues 1538-1551 are Extracellular-facing; that stretch reads FYGASVAYENALRV. A helical transmembrane segment spans residues 1552 to 1573; sequence FNIVFTSLFSLECVLKVMAFGI. Over 1574-1580 the chain is Cytoplasmic; sequence LNYFRDA. Residues 1581–1600 traverse the membrane as a helical segment; it reads WNIFDFVTVLGSITDILVTE. At 1601–1607 the chain is on the extracellular side; the sequence is FGNNFIN. N-linked (GlcNAc...) asparagine glycosylation is present at N1607. Residues 1608 to 1626 form a helical membrane-spanning segment; that stretch reads LSFLRLFRAARLIKLLRQG. The Cytoplasmic segment spans residues 1627 to 1645; the sequence is YTIRILLWTFVQSFKALPY. A helical transmembrane segment spans residues 1646-1665; it reads VCLLIAMLFFIYAIIGMQVF. Topologically, residues 1666 to 1737 are extracellular; it reads GNIGIDGEDE…IQKPECGNEF (72 aa). Residues 1738–1763 traverse the membrane as a helical segment; the sequence is AYFYFVSFIFLCSFLMLNLFVAVIMD. The Cytoplasmic segment spans residues 1764 to 2212; that stretch reads NFEYLTRDSS…EGREHATHRQ (449 aa). T1935 carries the post-translational modification Phosphothreonine. A disordered region spans residues 1940–2212; that stretch reads QRMEPPSPTQ…EGREHATHRQ (273 aa). Composition is skewed to polar residues over residues 1948–1963 and 1972–1997; these read TQEGGPSQNALPSTQL and QESSMKESPSWVTQRAQEMFQKTGTW. Residues S1998, S2016, S2028, S2030, S2071, and S2091 each carry the phosphoserine modification. The segment covering 2008 to 2017 has biased composition (polar residues); it reads PNSQPNSQSV. Positions 2018–2034 are enriched in basic and acidic residues; that stretch reads EMREMGTDGYSDSEHYL. A compositionally biased stretch (polar residues) spans 2064–2073; the sequence is LSTISDTSPM. 2 stretches are compositionally biased toward basic and acidic residues: residues 2085-2102 and 2143-2153; these read RRLDDYSLERVPPEENQR and PSKDRDQDRGR. A compositionally biased stretch (basic residues) spans 2154-2172; it reads PKDRKHRPHHHHHHHHHHP. Positions 2173 to 2212 are enriched in basic and acidic residues; sequence PAPDRERYAQERPDTGRARAREQRWSRSPSEGREHATHRQ.

Belongs to the calcium channel alpha-1 subunit (TC 1.A.1.11) family. CACNA1A subfamily. Voltage-dependent calcium channels are multisubunit complexes, consisting of alpha-1, alpha-2, beta and delta subunits in a 1:1:1:1 ratio. The channel activity is directed by the pore-forming and voltage-sensitive alpha-1 subunit. In many cases, this subunit is sufficient to generate voltage-sensitive calcium channel activity. The auxiliary subunits beta and alpha-2/delta linked by a disulfide bridge regulate the channel activity. Interacts (via C-terminal CDB motif) with CABP1 in the pre- and postsynaptic membranes. Interacts with the spider omega-agatoxin-IVA (AC P30288). Interacts with TSPOAP1. Brain specific. Purkinje cells contain predominantly P-type VSCC, the Q-type being a prominent calcium current in cerebellar granule cells. Also found in heart, in kidney distal convoluted tubule (DCT), and in pituitary.

It localises to the cell membrane. It carries out the reaction Ca(2+)(in) = Ca(2+)(out). Voltage-sensitive calcium channels (VSCC) mediate the entry of calcium ions into excitable cells and are also involved in a variety of calcium-dependent processes, including muscle contraction, hormone or neurotransmitter release, gene expression, cell motility, cell division and cell death. The isoform alpha-1A gives rise to P and/or Q-type calcium currents. P/Q-type calcium channels belong to the 'high-voltage activated' (HVA) group and are specifically blocked by the spider omega-agatoxin-IVA (AC P30288). They are however insensitive to dihydropyridines (DHP). This chain is Voltage-dependent P/Q-type calcium channel subunit alpha-1A, found in Rattus norvegicus (Rat).